The sequence spans 676 residues: LIM domain-containing protein 1 (676 aa).

Residues 54-134 (KIHLQQQQQQ…PPYPPQEQRS (81 aa)) form a mediates nuclear export region. Disordered regions lie at residues 104-163 (KPPL…SAFH) and 189-389 (KWGD…TSLV). Serine 145 bears the Phosphoserine mark. The segment at 186–260 (ASPKWGDKPG…IGGRSSEKPT (75 aa)) is interaction with EGLN1/PHD2. Composition is skewed to low complexity over residues 201-213 (GLSVGSGWPSSPG) and 232-242 (LSLSSSRSSEG). A phosphoserine mark is found at serine 233 and serine 239. The segment covering 243–253 (SLGGQNSGIGG) has biased composition (gly residues). Polar residues predominate over residues 262 to 271 (LWSTASSQRV). A phosphoserine mark is found at serine 272, serine 277, serine 304, and serine 316. Low complexity predominate over residues 343-360 (SYLSSSAPSSSPAGLDGS). The segment at 404 to 442 (GPLGWSSDGSLGSVLLDSPSSPRVRLPCQPLVPGPELRP) is interaction with RB1. Phosphoserine occurs at positions 421 and 424. LIM zinc-binding domains follow at residues 470 to 531 (GACV…SGFQ), 535 to 595 (DRCF…VLAP), and 595 to 664 (PKCA…RLEK). The interval 472 to 676 (CVKCSKGVFG…SSTALHQHHF (205 aa)) is necessary for nuclear localization.

This sequence belongs to the zyxin/ajuba family. As to quaternary structure, interacts (via LIM domains) with TRAF6. Found in a complex with TRAF6, PRKCZ and SQSTM1. Interacts (via LIM domains) SNAI2/SLUG (via SNAG domain) and SCRT1 (via SNAG domain). Interacts with SQSTM1 and RB1. Found in a complex composed of LIMD1, VHL, EGLN1/PHD2, ELOB and CUL2. Interacts with EIF4E, AGO1, AGO2, DCP2, DDX6, LATS1, LATS2, EGLN1/PHD2, EGLN2/PHD1 and EGLN3/PHD3. Interacts (via LIM zinc-binding 2) with isoform 1 and isoform 3 of VHL. Interacts (via LIM domains) with SNAI1 (via SNAG domain). In terms of processing, phosphorylated during mitosis. As to expression, expressed in normal and breast cancer tissues (at protein level). Ubiquitous.

The protein localises to the cytoplasm. It is found in the nucleus. The protein resides in the P-body. Its subcellular location is the cell junction. It localises to the adherens junction. The protein localises to the focal adhesion. Adapter or scaffold protein which participates in the assembly of numerous protein complexes and is involved in several cellular processes such as cell fate determination, cytoskeletal organization, repression of gene transcription, cell-cell adhesion, cell differentiation, proliferation and migration. Positively regulates microRNA (miRNA)-mediated gene silencing and is essential for P-body formation and integrity. Acts as a hypoxic regulator by bridging an association between the prolyl hydroxylases and VHL enabling efficient degradation of HIF1A. Acts as a transcriptional corepressor for SNAI1- and SNAI2/SLUG-dependent repression of E-cadherin transcription. Negatively regulates the Hippo signaling pathway and antagonizes phosphorylation of YAP1. Inhibits E2F-mediated transcription, and suppresses the expression of the majority of genes with E2F1-responsive elements. Regulates osteoblast development, function, differentiation and stress osteoclastogenesis. Enhances the ability of TRAF6 to activate adapter protein complex 1 (AP-1) and negatively regulates the canonical Wnt receptor signaling pathway in osteoblasts. May act as a tumor suppressor by inhibiting cell proliferation. The sequence is that of LIM domain-containing protein 1 (LIMD1) from Homo sapiens (Human).